Consider the following 373-residue polypeptide: Methylmalonyl-CoA decarboxylase subunit beta (373 aa).

A run of 10 helical transmembrane segments spans residues 17 to 37, 38 to 58, 81 to 101, 106 to 126, 132 to 152, 156 to 176, 206 to 226, 257 to 277, 280 to 300, and 343 to 363; these read FLAF…LLYL, AFAR…CLLA, IFPP…PLIA, LLLG…AMML, EAAA…YLAT, PHLL…VPLI, IVFP…ITSL, VTIF…FLSL, IKII…GVLF, and FLLM…AVAA.

Belongs to the GcdB/MmdB/OadB family. In terms of assembly, the methylmalonyl-CoA decarboxylase is composed of five subunits: the carboxyltransferase alpha subunit (MmdA), the tunnel beta subunit (MmdB), the biotin-containing gamma subunit (MmdC), and the delta (MmdD) and epsilon (MmdE) subunits. Post-translationally, the N-terminus is blocked.

The protein localises to the cell membrane. It catalyses the reaction (S)-methylmalonyl-CoA + Na(+)(in) + H(+)(out) = propanoyl-CoA + Na(+)(out) + CO2. Its activity is regulated as follows. Completely inhibited by avidin. Tunnel subunit of the sodium ion pump methylmalonyl-CoA decarboxylase, which converts the chemical energy of a decarboxylation reaction into an electrochemical gradient of Na(+) ions across the cytoplasmic membrane, thereby creating a sodium ion motive force that is used for ATP synthesis. The beta subunit catalyzes the decarboxylation of the carboxybiotin carrier protein and the coupled export of Na(+) ions. Can also convert malonyl-CoA into acetyl-CoA. The polypeptide is Methylmalonyl-CoA decarboxylase subunit beta (Veillonella parvula (Staphylococcus parvulus)).